The sequence spans 535 residues: CTP synthase (535 aa).

The amidoligase domain stretch occupies residues 1–267 (MTKYIFVTGG…DQIVLDHFGV (267 aa)). Position 13 (S13) interacts with CTP. Position 13 (S13) interacts with UTP. Residue 14-19 (SLGKGI) coordinates ATP. Y54 provides a ligand contact to L-glutamine. D71 contacts ATP. Mg(2+) contacts are provided by D71 and E141. Residues 148–150 (DIE), 188–193 (KTKPTQ), and K224 each bind CTP. UTP is bound by residues 188–193 (KTKPTQ) and K224. In terms of domain architecture, Glutamine amidotransferase type-1 spans 292–535 (KIALVGKYVA…VAAASREVKD (244 aa)). L-glutamine is bound at residue G354. C381 serves as the catalytic Nucleophile; for glutamine hydrolysis. Residues 382–385 (LGMQ), E405, and R463 each bind L-glutamine. Catalysis depends on residues H508 and E510.

This sequence belongs to the CTP synthase family. In terms of assembly, homotetramer.

It carries out the reaction UTP + L-glutamine + ATP + H2O = CTP + L-glutamate + ADP + phosphate + 2 H(+). The enzyme catalyses L-glutamine + H2O = L-glutamate + NH4(+). It catalyses the reaction UTP + NH4(+) + ATP = CTP + ADP + phosphate + 2 H(+). Its pathway is pyrimidine metabolism; CTP biosynthesis via de novo pathway; CTP from UDP: step 2/2. With respect to regulation, allosterically activated by GTP, when glutamine is the substrate; GTP has no effect on the reaction when ammonia is the substrate. The allosteric effector GTP functions by stabilizing the protein conformation that binds the tetrahedral intermediate(s) formed during glutamine hydrolysis. Inhibited by the product CTP, via allosteric rather than competitive inhibition. Catalyzes the ATP-dependent amination of UTP to CTP with either L-glutamine or ammonia as the source of nitrogen. Regulates intracellular CTP levels through interactions with the four ribonucleotide triphosphates. In Levilactobacillus brevis (strain ATCC 367 / BCRC 12310 / CIP 105137 / JCM 1170 / LMG 11437 / NCIMB 947 / NCTC 947) (Lactobacillus brevis), this protein is CTP synthase.